Reading from the N-terminus, the 174-residue chain is Probable inosine/xanthosine triphosphatase (174 aa).

Position 63 (Asp-63) interacts with Mg(2+).

This sequence belongs to the YjjX NTPase family. Homodimer. It depends on Mg(2+) as a cofactor. Mn(2+) serves as cofactor.

It carries out the reaction XTP + H2O = XDP + phosphate + H(+). It catalyses the reaction ITP + H2O = IDP + phosphate + H(+). Functionally, phosphatase that hydrolyzes non-canonical purine nucleotides such as XTP and ITP to their respective diphosphate derivatives. Probably excludes non-canonical purines from DNA/RNA precursor pool, thus preventing their incorporation into DNA/RNA and avoiding chromosomal lesions. In Methanocella arvoryzae (strain DSM 22066 / NBRC 105507 / MRE50), this protein is Probable inosine/xanthosine triphosphatase.